Here is a 236-residue protein sequence, read N- to C-terminus: Small ribosomal subunit protein uS3 (236 aa).

Residues 39 to 107 (VREFLKKSLS…PAQISITEIK (69 aa)) enclose the KH type-2 domain.

The protein belongs to the universal ribosomal protein uS3 family. As to quaternary structure, part of the 30S ribosomal subunit. Forms a tight complex with proteins S10 and S14.

Functionally, binds the lower part of the 30S subunit head. Binds mRNA in the 70S ribosome, positioning it for translation. The chain is Small ribosomal subunit protein uS3 from Wigglesworthia glossinidia brevipalpis.